A 472-amino-acid chain; its full sequence is ATP-dependent rRNA helicase rrp3 (472 aa).

The segment at 1-52 is disordered; sequence MPAIKKRKIAREAPQQEDHSDSEAHSSASEDAAPNTTEQEQEPSEAPKQAPK. A compositionally biased stretch (basic and acidic residues) spans 10–24; it reads AREAPQQEDHSDSEA. The short motif at 52 to 80 is the Q motif element; the sequence is KSFKELGLIEQLCEACDSMGYKAPTAIQA. In terms of domain architecture, Helicase ATP-binding spans 83–254; that stretch reads IPLALQGRDL…RASLQNPLRV (172 aa). Residue 96-103 coordinates ATP; sequence AETGSGKT. The short motif at 202–205 is the DEAD box element; that stretch reads DEAD. A Helicase C-terminal domain is found at 282–426; sequence YLVYLLNEFV…EYPAEKDEVM (145 aa). Positions 443–472 are disordered; sequence MKNYDEKKGSRGKKFAKGKRSREDMDQEEG. The segment covering 452–462 has biased composition (basic residues); sequence SRGKKFAKGKR.

It belongs to the DEAD box helicase family. DDX47/RRP3 subfamily. As to quaternary structure, interacts with the SSU processome.

The protein resides in the nucleus. The catalysed reaction is ATP + H2O = ADP + phosphate + H(+). Functionally, ATP-dependent rRNA helicase required for pre-ribosomal RNA processing. Involved in the maturation of the 35S-pre-rRNA and to its cleavage to mature 18S rRNA. This Aspergillus oryzae (strain ATCC 42149 / RIB 40) (Yellow koji mold) protein is ATP-dependent rRNA helicase rrp3.